Consider the following 155-residue polypeptide: Small ribosomal subunit protein uS7cz/uS7cy (155 aa).

This sequence belongs to the universal ribosomal protein uS7 family. In terms of assembly, part of the 30S ribosomal subunit.

The protein localises to the plastid. The protein resides in the chloroplast. Its function is as follows. One of the primary rRNA binding proteins, it binds directly to 16S rRNA where it nucleates assembly of the head domain of the 30S subunit. The polypeptide is Small ribosomal subunit protein uS7cz/uS7cy (rps7-A) (Crucihimalaya wallichii (Rock-cress)).